The sequence spans 497 residues: Sperm motility kinase Z (497 aa).

One can recognise a Protein kinase domain in the interval 28 to 275 (YTVLKTLSQH…AQDLLSHPWL (248 aa)). Residues 34–42 (LSQHGTTEV) and lysine 57 each bind ATP. Aspartate 146 serves as the catalytic Proton acceptor. Residues 292–332 (FPDPDIMAAMKNIGFHVQDIRESLKHRKFDETMATYNLLRA) enclose the UBA domain. Disordered stretches follow at residues 383–410 (TEEH…GRSQ) and 439–460 (SSQA…SCPL).

The protein belongs to the protein kinase superfamily. CAMK Ser/Thr protein kinase family. Smok subfamily.

It catalyses the reaction L-seryl-[protein] + ATP = O-phospho-L-seryl-[protein] + ADP + H(+). The enzyme catalyses L-threonyl-[protein] + ATP = O-phospho-L-threonyl-[protein] + ADP + H(+). Functionally, may play a role in sperm motility, especially in the regulation of flagellar function. This is Sperm motility kinase Z (Gm4922) from Mus musculus (Mouse).